Here is a 98-residue protein sequence, read N- to C-terminus: Cytochrome c2 (98 aa).

Gln-1 is subject to Pyrrolidone carboxylic acid. Heme c contacts are provided by Cys-10, Cys-13, His-14, and Met-76.

The protein belongs to the cytochrome c family. Post-translationally, binds 1 heme c group covalently per subunit.

It localises to the periplasm. Cytochrome c2 is found mainly in purple, non-sulfur, photosynthetic bacteria where it functions as the electron donor to the oxidized bacteriochlorophyll in the photophosphorylation pathway. However, it may also have a role in the respiratory chain and is found in some non-photosynthetic bacteria. The polypeptide is Cytochrome c2 (Rhodoplanes tepidamans (Rhodoplanes cryptolactis)).